A 226-amino-acid polypeptide reads, in one-letter code: LIM domain-containing protein PLIM2a (226 aa).

2 consecutive LIM zinc-binding domains span residues 8-68 and 104-164; these read DKCK…LFKE and DKCA…LFLE. The tract at residues 173-226 is disordered; sequence QAAANHRRSASSGGASPPSDDHKPDDTASIPEAKEDDAAPEAAGEEEPEPVVES. Residues 191–209 show a composition bias toward basic and acidic residues; sequence SDDHKPDDTASIPEAKEDD. The span at 210 to 226 shows a compositional bias: acidic residues; it reads AAPEAAGEEEPEPVVES.

As to quaternary structure, interacts with F-actin. In terms of tissue distribution, predominantly expressed in flowers, in the tapetum and in pollen grains. Detected in leaves and stems.

It is found in the cytoplasm. The protein resides in the cytoskeleton. In terms of biological role, binds to actin filaments and promotes cross-linking into thick bundles. Has an actin-stabilizing activity. The actin regulatory activities are inhibited by pH &gt; 6.8 but are [Ca(2+)] independent. The chain is LIM domain-containing protein PLIM2a from Arabidopsis thaliana (Mouse-ear cress).